Reading from the N-terminus, the 303-residue chain is tRNA-cytidine(32) 2-sulfurtransferase (303 aa).

The PP-loop motif signature appears at 49–54; the sequence is SGGKDS. [4Fe-4S] cluster-binding residues include Cys124, Cys127, and Cys215.

It belongs to the TtcA family. Homodimer. Mg(2+) serves as cofactor. Requires [4Fe-4S] cluster as cofactor.

The protein localises to the cytoplasm. The catalysed reaction is cytidine(32) in tRNA + S-sulfanyl-L-cysteinyl-[cysteine desulfurase] + AH2 + ATP = 2-thiocytidine(32) in tRNA + L-cysteinyl-[cysteine desulfurase] + A + AMP + diphosphate + H(+). It participates in tRNA modification. Its function is as follows. Catalyzes the ATP-dependent 2-thiolation of cytidine in position 32 of tRNA, to form 2-thiocytidine (s(2)C32). The sulfur atoms are provided by the cysteine/cysteine desulfurase (IscS) system. This is tRNA-cytidine(32) 2-sulfurtransferase from Anaeromyxobacter sp. (strain Fw109-5).